The primary structure comprises 524 residues: Sterol O-acyltransferase 2 (524 aa).

Positions Met-1–His-31 are disordered. Residues Met-1–Phe-118 are Cytoplasmic-facing. His-117 is a cholesterol binding site. The chain crosses the membrane as a helical span at residues Arg-119–Asp-140. Residues Phe-141 to Gln-160 lie on the Lumenal side of the membrane. A helical transmembrane segment spans residues Leu-161 to Trp-186. The Cytoplasmic portion of the chain corresponds to Ala-187–Gly-198. Residues Ala-199 to Val-222 form a helical membrane-spanning segment. The Lumenal segment spans residues Lys-223–Ser-230. A helical transmembrane segment spans residues Arg-231–Pro-254. The Cytoplasmic segment spans residues Gly-255–Arg-295. Residue Cys-279 is modified to Cysteine sulfenic acid (-SOH); alternate. A Glycyl cysteine thioester (Cys-Gly) (interchain with G-Cter in ubiquitin); alternate cross-link involves residue Cys-279. A helical membrane pass occupies residues Trp-296–Met-328. Residues Ser-329 to Ala-345 lie on the Lumenal side of the membrane. The chain crosses the membrane as a helical span at residues Thr-346–Met-371. Residues Leu-372 to Gln-419 are Cytoplasmic-facing. The FYXDWWN motif signature appears at Phe-379–Asn-385. An acyl-CoA-binding residues include Asn-391, Arg-394, Asn-397, His-401, Tyr-409, and Ser-432. The helical transmembrane segment at Gly-420–Leu-444 threads the bilayer. His-436 is a catalytic residue. Over Gly-445–Val-450 the chain is Lumenal. Residues Met-451–Met-466 traverse the membrane as a helical segment. Topologically, residues Asn-467–Gly-472 are cytoplasmic. Residues Pro-473–Cys-504 form a helical membrane-spanning segment. Over Pro-505–Pro-524 the chain is Lumenal.

Belongs to the membrane-bound acyltransferase family. Sterol o-acyltransferase subfamily. May form homo- or heterodimers. Interacts with INSIG1; the interaction is direct and promotes association with AMFR/gp78. Polyubiquitinated by AMFR/gp78 at Cys-279, leading to its degradation when the lipid levels are low. Association with AMFR/gp78 is mediated via interaction with INSIG1. High concentration of cholesterol and fatty acid results in Cys-279 oxidation, preventing ubiquitination at the same site, resulting in protein stabilization. Post-translationally, oxidized at Cys-279: high concentration of cholesterol and fatty acid induce reactive oxygen species, which oxidizes Cys-279, preventing ubiquitination at the same site, and resulting in protein stabilization.

It is found in the endoplasmic reticulum membrane. It catalyses the reaction a sterol + a long-chain fatty acyl-CoA = a long-chain 3-hydroxysterol ester + CoA. It carries out the reaction cholesterol + an acyl-CoA = a cholesterol ester + CoA. The catalysed reaction is cholesterol + (9Z)-octadecenoyl-CoA = cholesteryl (9Z-octadecenoate) + CoA. The enzyme catalyses (5Z,8Z,11Z,14Z,17Z)-eicosapentaenoyl-CoA + cholesterol = (5Z,8Z,11Z,14Z,17Z-eicosapentaenoyl)-cholesterol + CoA. It catalyses the reaction (9Z,12Z,15Z)-octadecatrienoyl-CoA + cholesterol = (9Z,12Z,15Z-octadecatrienoyl)-cholesterol + CoA. It carries out the reaction (5Z,8Z,11Z,14Z)-eicosatetraenoyl-CoA + cholesterol = cholesteryl (5Z,8Z,11Z,14Z)-eicosatetraenoate + CoA. Catalyzes the formation of fatty acid-cholesterol esters, which are less soluble in membranes than cholesterol. Plays a role in lipoprotein assembly and dietary cholesterol absorption. Utilizes oleoyl-CoA ((9Z)-octadecenoyl-CoA) and linolenoyl-CoA ((9Z,12Z,15Z)-octadecatrienoyl-CoA) as substrates. May provide cholesteryl esters for lipoprotein secretion from hepatocytes and intestinal mucosa. The chain is Sterol O-acyltransferase 2 from Rattus norvegicus (Rat).